A 317-amino-acid polypeptide reads, in one-letter code: MTCKIIGSGGYLPPKIISNDELTKFVDTNDKWIRTRTGILQRHIAGDAEYTSHLAFKSAQKAIEDAMISVDDIDLIIICTTTPDNSFPSVATKLHGYLGLTNIPSFDLQAVCAGFIYGLQLAHSLIVSGKYKTILLIGAEKMTSLLDWNDRSTCVLFGDGAGSVILQRSNDDSGLIDSNIFSSGTDYEILYTSGGTSMNGTSGKIVMQGQKLFRHAIEKMLQSIEDLLYANQFSVSDIDYFIPHQANIRIINKLAELLNIEEHKVVKTVEKHANCSAASIPLALSALKESGKIKKGDILLFSAIGAGLTWGGALIRW.

Active-site residues include C112 and H244. Residues 245–249 are ACP-binding; sequence QANIR. The active site involves N274.

This sequence belongs to the thiolase-like superfamily. FabH family. In terms of assembly, homodimer.

Its subcellular location is the cytoplasm. The catalysed reaction is malonyl-[ACP] + acetyl-CoA + H(+) = 3-oxobutanoyl-[ACP] + CO2 + CoA. The protein operates within lipid metabolism; fatty acid biosynthesis. Its function is as follows. Catalyzes the condensation reaction of fatty acid synthesis by the addition to an acyl acceptor of two carbons from malonyl-ACP. Catalyzes the first condensation reaction which initiates fatty acid synthesis and may therefore play a role in governing the total rate of fatty acid production. Possesses both acetoacetyl-ACP synthase and acetyl transacylase activities. Its substrate specificity determines the biosynthesis of branched-chain and/or straight-chain of fatty acids. This Rickettsia prowazekii (strain Madrid E) protein is Beta-ketoacyl-[acyl-carrier-protein] synthase III.